The primary structure comprises 389 residues: Succinate--CoA ligase [ADP-forming] subunit beta (389 aa).

Positions 9–244 (KQLFADYGLP…PSQEDERERR (236 aa)) constitute an ATP-grasp domain. ATP-binding positions include K46, 53–55 (GRG), E99, T102, and E107. Residues N199 and D213 each contribute to the Mg(2+) site. Substrate contacts are provided by residues N264 and 321–323 (GIV).

Belongs to the succinate/malate CoA ligase beta subunit family. Heterotetramer of two alpha and two beta subunits. It depends on Mg(2+) as a cofactor.

It catalyses the reaction succinate + ATP + CoA = succinyl-CoA + ADP + phosphate. The enzyme catalyses GTP + succinate + CoA = succinyl-CoA + GDP + phosphate. The protein operates within carbohydrate metabolism; tricarboxylic acid cycle; succinate from succinyl-CoA (ligase route): step 1/1. Succinyl-CoA synthetase functions in the citric acid cycle (TCA), coupling the hydrolysis of succinyl-CoA to the synthesis of either ATP or GTP and thus represents the only step of substrate-level phosphorylation in the TCA. The beta subunit provides nucleotide specificity of the enzyme and binds the substrate succinate, while the binding sites for coenzyme A and phosphate are found in the alpha subunit. This is Succinate--CoA ligase [ADP-forming] subunit beta from Alcanivorax borkumensis (strain ATCC 700651 / DSM 11573 / NCIMB 13689 / SK2).